The chain runs to 429 residues: Enolase (429 aa).

Glutamine 168 serves as a coordination point for (2R)-2-phosphoglycerate. The active-site Proton donor is the glutamate 210. Mg(2+) contacts are provided by aspartate 247, glutamate 288, and aspartate 315. (2R)-2-phosphoglycerate contacts are provided by lysine 340, arginine 369, serine 370, and lysine 391. Lysine 340 serves as the catalytic Proton acceptor.

The protein belongs to the enolase family. Requires Mg(2+) as cofactor.

It is found in the cytoplasm. The protein resides in the secreted. Its subcellular location is the cell surface. It carries out the reaction (2R)-2-phosphoglycerate = phosphoenolpyruvate + H2O. It participates in carbohydrate degradation; glycolysis; pyruvate from D-glyceraldehyde 3-phosphate: step 4/5. Functionally, catalyzes the reversible conversion of 2-phosphoglycerate (2-PG) into phosphoenolpyruvate (PEP). It is essential for the degradation of carbohydrates via glycolysis. The sequence is that of Enolase from Nostoc sp. (strain PCC 7120 / SAG 25.82 / UTEX 2576).